The sequence spans 180 residues: Beta-lactoglobulin (180 aa).

The first 18 residues, 1–18, serve as a signal peptide directing secretion; the sequence is MKCLLLALGLALACGIQA. 3 disulfides stabilise this stretch: cysteine 84-cysteine 178, cysteine 124-cysteine 137, and cysteine 124-cysteine 139.

This sequence belongs to the calycin superfamily. Lipocalin family. Under physiological conditions beta-lactoglobulin exists as an equilibrium mixture of monomeric and dimeric forms. Interaction with LMBR1L is controversial. In terms of processing, alternate disulfide bonds occur in equal amounts. In terms of tissue distribution, synthesized in mammary gland and secreted in milk.

The protein localises to the secreted. In terms of biological role, primary component of whey, it binds retinol and is probably involved in the transport of that molecule. The chain is Beta-lactoglobulin (LGB) from Capra hircus (Goat).